The chain runs to 327 residues: Polyadenylate-binding protein-interacting protein 9 (327 aa).

The PAM2-like signature appears at 59–69; sequence KLNPLAKEFFP. The span at 97–113 shows a compositional bias: basic and acidic residues; it reads KQSGEEFDLDAKKDDNT. The tract at residues 97-132 is disordered; that stretch reads KQSGEEFDLDAKKDDNTRKRRNYSQGRRRLTGRISK. The Bipartite nuclear localization signal motif lies at 114 to 125; sequence RKRRNYSQGRRR. Over residues 114–127 the composition is skewed to basic residues; the sequence is RKRRNYSQGRRRLT. 2 consecutive RRM domains span residues 141 to 216 and 238 to 314; these read RTVY…PSKT and RTIY…PSKT. A disordered region spans residues 308-327; it reads RVSPSKTPVRPRITRPPSTN.

Its subcellular location is the nucleus. The polypeptide is Polyadenylate-binding protein-interacting protein 9 (CID9) (Arabidopsis thaliana (Mouse-ear cress)).